Reading from the N-terminus, the 274-residue chain is Rhamnulose-1-phosphate aldolase (274 aa).

Residue Glu117 is part of the active site. The Zn(2+) site is built by His141, His143, and His212.

This sequence belongs to the aldolase class II family. RhaD subfamily. As to quaternary structure, homotetramer. Zn(2+) serves as cofactor.

It is found in the cytoplasm. The enzyme catalyses L-rhamnulose 1-phosphate = (S)-lactaldehyde + dihydroxyacetone phosphate. Its pathway is carbohydrate degradation; L-rhamnose degradation; glycerone phosphate from L-rhamnose: step 3/3. In terms of biological role, catalyzes the reversible cleavage of L-rhamnulose-1-phosphate to dihydroxyacetone phosphate (DHAP) and L-lactaldehyde. This chain is Rhamnulose-1-phosphate aldolase, found in Escherichia coli (strain K12 / MC4100 / BW2952).